The chain runs to 210 residues: NDR1/HIN1-like protein 12 (210 aa).

Residues Gly23 to Leu43 traverse the membrane as a helical segment. A glycan (N-linked (GlcNAc...) asparagine) is linked at Asn61.

As to quaternary structure, may form oligomers or be a component of larger protein complex in plasma membranes. In terms of tissue distribution, expressed in leaves, stems and flowers, and, to a lower extent, in siliques and roots.

It is found in the cell membrane. Its function is as follows. May play a role in plant immunity. In Arabidopsis thaliana (Mouse-ear cress), this protein is NDR1/HIN1-like protein 12.